A 358-amino-acid chain; its full sequence is Chorismate synthase (358 aa).

A disordered region spans residues 39 to 61 (ADIQPFLDKRRPGQSRHTTQRQE). Positions 48 and 54 each coordinate NADP(+). FMN contacts are provided by residues 125–127 (RSS), 237–238 (NA), G284, 299–303 (KPTSS), and R325.

It belongs to the chorismate synthase family. As to quaternary structure, homotetramer. Requires FMNH2 as cofactor.

The enzyme catalyses 5-O-(1-carboxyvinyl)-3-phosphoshikimate = chorismate + phosphate. It participates in metabolic intermediate biosynthesis; chorismate biosynthesis; chorismate from D-erythrose 4-phosphate and phosphoenolpyruvate: step 7/7. Its function is as follows. Catalyzes the anti-1,4-elimination of the C-3 phosphate and the C-6 proR hydrogen from 5-enolpyruvylshikimate-3-phosphate (EPSP) to yield chorismate, which is the branch point compound that serves as the starting substrate for the three terminal pathways of aromatic amino acid biosynthesis. This reaction introduces a second double bond into the aromatic ring system. This Sphingopyxis alaskensis (strain DSM 13593 / LMG 18877 / RB2256) (Sphingomonas alaskensis) protein is Chorismate synthase.